A 153-amino-acid polypeptide reads, in one-letter code: Interleukin-17A (153 aa).

Positions 1-23 (MTPVRSSSLSLLLLLSLVALVKA) are cleaved as a signal peptide. N53 carries an N-linked (GlcNAc...) asparagine glycan. Cystine bridges form between C92–C142 and C97–C144.

It belongs to the IL-17 family. In terms of assembly, homodimer. Forms complexes with IL17RA and IL17RC receptors with 2:1 binding stoichiometry: two receptor chains for one interleukin molecule. IL17A homodimer preferentially drives the formation of IL17RA-IL17RC heterodimeric receptor complex. IL17A homodimer adopts an asymmetrical ternary structure with one IL17RA molecule, allowing for high affinity interactions of one IL17A monomer with one IL17RA molecule (via D1 and D2 domains), while disfavoring binding of a second IL17RA molecule on the other IL17A monomer. Heterodimer with IL17F. IL17A-IL17F forms complexes with IL17RA-IL17RC, but with lower affinity when compared to IL17A homodimer. IL17RA and IL17RC chains cannot distinguish between IL17A and IL17F molecules, potentially enabling the formation of topologically distinct complexes. Highly expressed in adult heart, skin, and intestinal tissues, such as jejunum and ileum.

The protein localises to the secreted. Its function is as follows. Effector cytokine of innate and adaptive immune system involved in antimicrobial host defense and maintenance of tissue integrity. Signals via IL17RA-IL17RC heterodimeric receptor complex, triggering homotypic interaction of IL17RA and IL17RC chains with TRAF3IP2 adapter. This leads to downstream TRAF6-mediated activation of NF-kappa-B and MAPkinase pathways ultimately resulting in transcriptional activation of cytokines, chemokines, antimicrobial peptides and matrix metalloproteinases, with potential strong immune inflammation. Plays an important role in connecting T cell-mediated adaptive immunity and acute inflammatory response to destroy extracellular bacteria and fungi. As a signature effector cytokine of T-helper 17 cells (Th17), primarily induces neutrophil activation and recruitment at infection and inflammatory sites. In airway epithelium, mediates neutrophil chemotaxis via induction of CXCL1 and CXCL5 chemokines. In secondary lymphoid organs, contributes to germinal center formation by regulating the chemotactic response of B cells to CXCL12 and CXCL13, enhancing retention of B cells within the germinal centers, B cell somatic hypermutation rate and selection toward plasma cells. Effector cytokine of a subset of gamma-delta T cells that functions as part of an inflammatory circuit downstream IL1B, TLR2 and IL23A-IL12B to promote neutrophil recruitment for efficient bacterial clearance. Effector cytokine of innate immune cells including invariant natural killer cell (iNKT) and group 3 innate lymphoid cells that mediate initial neutrophilic inflammation. Involved in the maintenance of the integrity of epithelial barriers during homeostasis and pathogen infection. Upon acute injury, has a direct role in epithelial barrier formation by regulating OCLN localization and tight junction biogenesis. As part of the mucosal immune response induced by commensal bacteria, enhances host's ability to resist pathogenic bacterial and fungal infections by promoting neutrophil recruitment and antimicrobial peptides release. In synergy with IL17F, mediates the production of antimicrobial beta-defensins DEFB1, DEFB103A, and DEFB104A by mucosal epithelial cells, limiting the entry of microbes through the epithelial barriers. Involved in antiviral host defense through various mechanisms. Enhances immunity against West Nile virus by promoting T cell cytotoxicity. May play a beneficial role in influenza A virus (H5N1) infection by enhancing B cell recruitment and immune response in the lung. Contributes to influenza A virus (H1N1) clearance by driving the differentiation of B-1a B cells, providing for production of virus-specific IgM antibodies at first line of host defense. This Sus scrofa (Pig) protein is Interleukin-17A (IL17A).